A 368-amino-acid polypeptide reads, in one-letter code: Ferrochelatase (368 aa).

His-209 and Glu-290 together coordinate Fe cation. The tract at residues Ala-341 to Gln-368 is disordered.

The protein belongs to the ferrochelatase family.

The protein localises to the cytoplasm. It carries out the reaction heme b + 2 H(+) = protoporphyrin IX + Fe(2+). It participates in porphyrin-containing compound metabolism; protoheme biosynthesis; protoheme from protoporphyrin-IX: step 1/1. In terms of biological role, catalyzes the ferrous insertion into protoporphyrin IX. This is Ferrochelatase from Nitrosococcus oceani (strain ATCC 19707 / BCRC 17464 / JCM 30415 / NCIMB 11848 / C-107).